The following is a 262-amino-acid chain: Transcription factor Spi-B (262 aa).

Residues Met-1–His-31 are TAD1 (Acidic). Residues Pro-41–Phe-61 are TAD2. The segment at Ala-140–Ala-163 is disordered. The ETS DNA-binding region spans Leu-169–Asp-252.

Belongs to the ETS family. Can form homotypic interactions. Interacts with IRF4/Pip. Interacts with JUN. Interacts with TBP. May also interact with CREBBP and EP300. Interacts with NONO/p54(nrb). Expressed in plasmacytoid dendritic cells (pDCs) and B-cells, not expressed in T-cells or granulocytes. May also be enriched in stem cell populations of the liver.

Its subcellular location is the nucleus. It is found in the cytoplasm. Sequence specific transcriptional activator which binds to the PU-box, a purine-rich DNA sequence (5'-GAGGAA-3') that can act as a lymphoid-specific enhancer. Promotes development of plasmacytoid dendritic cells (pDCs), also known as type 2 DC precursors (pre-DC2) or natural interferon (IFN)-producing cells. These cells have the capacity to produce large amounts of interferon and block viral replication. May be required for B-cell receptor (BCR) signaling, which is necessary for normal B-cell development and antigenic stimulation. This chain is Transcription factor Spi-B (SPIB), found in Homo sapiens (Human).